A 248-amino-acid chain; its full sequence is UPF0246 protein A1I_02510 (248 aa).

Belongs to the UPF0246 family.

This chain is UPF0246 protein A1I_02510, found in Rickettsia bellii (strain OSU 85-389).